Here is a 212-residue protein sequence, read N- to C-terminus: NAD(P)H-hydrate epimerase (212 aa).

The YjeF N-terminal domain occupies 11-212 (MRHYDSYTIN…ANDMGTYAVD (202 aa)). 60 to 64 (NNGGD) lines the (6S)-NADPHX pocket. Residues asparagine 61 and aspartate 123 each contribute to the K(+) site. (6S)-NADPHX is bound by residues 127–133 (GIGIDRA), tyrosine 138, and aspartate 156. Serine 159 is a K(+) binding site.

Belongs to the NnrE/AIBP family. K(+) is required as a cofactor.

The enzyme catalyses (6R)-NADHX = (6S)-NADHX. It catalyses the reaction (6R)-NADPHX = (6S)-NADPHX. Functionally, catalyzes the epimerization of the S- and R-forms of NAD(P)HX, a damaged form of NAD(P)H that is a result of enzymatic or heat-dependent hydration. This is a prerequisite for the S-specific NAD(P)H-hydrate dehydratase to allow the repair of both epimers of NAD(P)HX. This Limosilactobacillus reuteri (strain ATCC 55730 / SD2112) (Lactobacillus reuteri) protein is NAD(P)H-hydrate epimerase.